Here is a 76-residue protein sequence, read N- to C-terminus: Omega-conotoxin-like TxO1 (76 aa).

The signal sequence occupies residues 1–22; the sequence is MKLTCVVIVAVLFLTVWTFATA. Residues 23 to 50 constitute a propeptide that is removed on maturation; that stretch reads DDSGNGLEKLFSNAHHEMKNPEASKLNE. Cystine bridges form between cysteine 52-cysteine 67, cysteine 59-cysteine 70, and cysteine 66-cysteine 75.

Belongs to the conotoxin O1 superfamily. In terms of tissue distribution, expressed by the venom duct.

The protein localises to the secreted. Functionally, omega-conotoxins act at presynaptic membranes, they bind and block voltage-gated calcium channels (Cav). The protein is Omega-conotoxin-like TxO1 of Conus textile (Cloth-of-gold cone).